Reading from the N-terminus, the 75-residue chain is Large ribosomal subunit protein bL31 (75 aa).

The protein belongs to the bacterial ribosomal protein bL31 family. Type A subfamily. As to quaternary structure, part of the 50S ribosomal subunit.

Functionally, binds the 23S rRNA. This chain is Large ribosomal subunit protein bL31, found in Bradyrhizobium sp. (strain BTAi1 / ATCC BAA-1182).